The following is a 462-amino-acid chain: Toxin CqTX-A (462 aa).

The N-terminal stretch at 1–19 is a signal peptide; sequence MANMLYFSLLALLFMTGIA. An N-linked (GlcNAc...) asparagine glycan is attached at Asn-174.

The protein belongs to the jellyfish toxin family. Type I subfamily. In terms of processing, contains disulfide bonds. Post-translationally, N-glycosylated.

The protein localises to the secreted. The protein resides in the nematocyst. It is found in the target cell membrane. Critical allergen and main toxic protein of C.quadrigatus venom. Has potent hemolytic activity. Is lethal to crayfish. Causes cutaneous inflammation in humans. May act as a pore-forming toxin, disrupting normal transmembrane ion concentration gradients in susceptible cells. This is Toxin CqTX-A from Chiropsoides quadrigatus (Box jellyfish).